A 502-amino-acid polypeptide reads, in one-letter code: Probable ADP-dependent glucokinase (502 aa).

The first 32 residues, 1–32 (MFSETFVPSIFSYKHRLLHLSVLFFIVPYWYS), serve as a signal peptide directing secretion. Residues 44–497 (SVETAMFLSW…LLYSQFYRLN (454 aa)) form the ADPK domain. 2 N-linked (GlcNAc...) asparagine glycosylation sites follow: Asn89 and Asn190. Positions 290, 320, and 481 each coordinate Mg(2+). Asp481 functions as the Proton acceptor in the catalytic mechanism.

It belongs to the ADP-dependent glucokinase family. As to quaternary structure, monomer. The cofactor is Mg(2+).

Its subcellular location is the secreted. It carries out the reaction D-glucose + ADP = D-glucose 6-phosphate + AMP + H(+). Its pathway is carbohydrate degradation; glycolysis. Catalyzes the phosphorylation of D-glucose to D-glucose 6-phosphate using ADP as the phosphate donor. GDP and CDP can replace ADP, but with reduced efficiency. This chain is Probable ADP-dependent glucokinase, found in Caenorhabditis elegans.